Reading from the N-terminus, the 363-residue chain is Des-methyl DIF-1 methyltransferase A (363 aa).

S-adenosyl-L-methionine-binding residues include Gly-195, Asp-221, Asp-250, Leu-251, and Lys-266. His-270 functions as the Proton acceptor in the catalytic mechanism.

The protein belongs to the class I-like SAM-binding methyltransferase superfamily. Cation-independent O-methyltransferase family. COMT subfamily.

It carries out the reaction (3,5-dichloro-2,4,6-trihydroxyphenyl)hexan-1-one + S-adenosyl-L-methionine = 1-(3,5-dichloro-2,6-dihydroxy-4-methoxyphenyl)hexan-1-one + S-adenosyl-L-homocysteine + H(+). Its function is as follows. O-methyltransferase; part of the gene cluster that mediates the biosynthesis of DIF-1 (Differentiation Inducing Factor-1), a signal molecule involved in the differentiation of pstO (prestalk-O) cells. The three-step process begins with the formation of (2,4,6-trihydroxyphenyl)-1-hexan-1-one (THPH) by the polyketide synthase StlB. THPH is then dichlorinated by the flavin-dependent halogenase ChlA. The last step of DIF-1 biosynthesis is the O-methylation of dichloro-THPH (or des-methyl-DIF-1) by the methyltransferase DmtA to yield DIF-1. This chain is Des-methyl DIF-1 methyltransferase A, found in Dictyostelium discoideum (Social amoeba).